Here is a 171-residue protein sequence, read N- to C-terminus: uncharacterized protein (171 aa).

This sequence belongs to the transferase hexapeptide repeat family.

This is an uncharacterized protein from Bacillus subtilis (strain 168).